A 129-amino-acid chain; its full sequence is Protein BEX2 (129 aa).

The segment at 1–37 is disordered; it reads MESKVEQGVKNLNMENDHQEKEEKEEKPQDASKRDPI. Over residues 15-36 the composition is skewed to basic and acidic residues; the sequence is ENDHQEKEEKEEKPQDASKRDP. The residue at position 51 (Arg-51) is an Omega-N-methylarginine. The interval 118-122 is his cluster; it reads HHDHH. Cys-126 is a binding site for Zn(2+).

This sequence belongs to the BEX family. As to quaternary structure, interacts with LMO2, possibly leading to regulate the transcriptional activity of a DNA-binding complex containing LMO2. Interacts with OMP. As to expression, primarily localized to neuronal cells within several regions of the brain, including the olfactory epithelium, bulb, peri/paraventricular nuclei, suprachiasmatic nucleus, arcuate nucleus, median eminence, lateral hypothalamic area, thalamus, hippocampus and cerebellum (at protein level).

The protein resides in the cytoplasm. It is found in the nucleus. In terms of biological role, regulator of mitochondrial apoptosis and G1 cell cycle. Regulates the level of PP2A regulatory subunit B and PP2A phosphatase activity. In absence of reductive stress, acts as a pseudosubstrate for the CRL2(FEM1B) complex: associates with FEM1B via zinc, thereby preventing association between FEM1B and its substrates. The protein is Protein BEX2 of Mus musculus (Mouse).